Consider the following 251-residue polypeptide: tRNA (guanine-N(7)-)-methyltransferase (251 aa).

The disordered stretch occupies residues 1 to 29 (MTQTLSSQDPQAPAAPPMPGAAGSAPADV). Positions 84, 109, 136, and 159 each coordinate S-adenosyl-L-methionine. Asp159 is an active-site residue. Lys163 is a binding site for substrate. An interaction with RNA region spans residues 165–170 (RHNKRR). Residues Asp195 and 230–233 (TKFE) each bind substrate.

Belongs to the class I-like SAM-binding methyltransferase superfamily. TrmB family.

The catalysed reaction is guanosine(46) in tRNA + S-adenosyl-L-methionine = N(7)-methylguanosine(46) in tRNA + S-adenosyl-L-homocysteine. The protein operates within tRNA modification; N(7)-methylguanine-tRNA biosynthesis. Catalyzes the formation of N(7)-methylguanine at position 46 (m7G46) in tRNA. In Acidovorax sp. (strain JS42), this protein is tRNA (guanine-N(7)-)-methyltransferase.